Consider the following 360-residue polypeptide: MERVYNFSAGPSILPLPVLEKVQKELVNYNGTGMSIMEMSHRSSYFQSIIDEAGSLLRELMNIPDEYEVLFLQGGASLQFSMIPLNVMNTYKKAGYILTGSWSKKAMQEAEKVGEVQVIASSENEKFTTIPRLDGLLGDEKLDYVHITTNNTIEGTKYVDIPHVDKVPLVADMSSNILSERYDVSKFGLIYAGAQKNLGPAGLTIAIIKRDLIGGADRSCPTMLNYETYSKNNSLYNTPPSFSIYVTKLVLEWLKEQGGVSAIEEQNRMKSSLLYNFLDESKLFTSPVDPTYRSLMNIPFTTPSEELNSEFLQKAKERGLVTLKGHRSVGGMRASIYNAMPAEGVQQLVNYMKEFELENR.

Arg42 is an L-glutamate binding site. Residues 76 to 77 (AS), Trp102, Thr152, Asp172, and Gln195 contribute to the pyridoxal 5'-phosphate site. The residue at position 196 (Lys196) is an N6-(pyridoxal phosphate)lysine. A pyridoxal 5'-phosphate-binding site is contributed by 237–238 (NT).

Belongs to the class-V pyridoxal-phosphate-dependent aminotransferase family. SerC subfamily. Homodimer. Pyridoxal 5'-phosphate is required as a cofactor.

The protein resides in the cytoplasm. The enzyme catalyses O-phospho-L-serine + 2-oxoglutarate = 3-phosphooxypyruvate + L-glutamate. It carries out the reaction 4-(phosphooxy)-L-threonine + 2-oxoglutarate = (R)-3-hydroxy-2-oxo-4-phosphooxybutanoate + L-glutamate. It functions in the pathway amino-acid biosynthesis; L-serine biosynthesis; L-serine from 3-phospho-D-glycerate: step 2/3. In terms of biological role, catalyzes the reversible conversion of 3-phosphohydroxypyruvate to phosphoserine and of 3-hydroxy-2-oxo-4-phosphonooxybutanoate to phosphohydroxythreonine. The polypeptide is Phosphoserine aminotransferase (Bacillus cereus (strain ATCC 10987 / NRS 248)).